The chain runs to 472 residues: Zinc finger imprinted 3 (472 aa).

The 73-residue stretch at 8–80 (VTFEDVTVNF…EEEVLGSGRA (73 aa)) folds into the KRAB domain. 11 consecutive C2H2-type zinc fingers follow at residues 167-189 (LKCN…LRRH), 195-217 (FECH…QKTH), 223-245 (YKCE…QKMH), 251-273 (YQCK…EKIH), 279-301 (YQCN…KKVH), 307-329 (FQCT…QRIH), 335-357 (YKCS…EKIH), 363-385 (YECD…KKIH), 391-413 (YECN…QKTH), 419-441 (YRCS…KKTH), and 447-470 (YGCS…KRIH).

It belongs to the krueppel C2H2-type zinc-finger protein family.

Its subcellular location is the nucleus. May be involved in transcriptional regulation. This is Zinc finger imprinted 3 (ZIM3) from Homo sapiens (Human).